Consider the following 383-residue polypeptide: ATP phosphoribosyltransferase regulatory subunit (383 aa).

It belongs to the class-II aminoacyl-tRNA synthetase family. HisZ subfamily. Heteromultimer composed of HisG and HisZ subunits.

Its subcellular location is the cytoplasm. Its pathway is amino-acid biosynthesis; L-histidine biosynthesis; L-histidine from 5-phospho-alpha-D-ribose 1-diphosphate: step 1/9. In terms of biological role, required for the first step of histidine biosynthesis. May allow the feedback regulation of ATP phosphoribosyltransferase activity by histidine. The polypeptide is ATP phosphoribosyltransferase regulatory subunit (Cupriavidus pinatubonensis (strain JMP 134 / LMG 1197) (Cupriavidus necator (strain JMP 134))).